The sequence spans 530 residues: tRNA-2-methylthio-N(6)-dimethylallyladenosine synthase (530 aa).

The region spanning 19–134 is the MTTase N-terminal domain; that stretch reads RTYEVRTYGC…LPTLLERARH (116 aa). [4Fe-4S] cluster contacts are provided by C28, C63, C97, C171, C175, and C178. The 231-residue stretch at 157–387 folds into the Radical SAM core domain; it reads RDEIASGWVS…TALQERISHE (231 aa). A TRAM domain is found at 390 to 460; that stretch reads QRVVGRTVEV…PFHLIADSVD (71 aa). The tract at residues 509 to 530 is disordered; it reads VPTTASTSAPVGDGSAHPRHRA.

This sequence belongs to the methylthiotransferase family. MiaB subfamily. As to quaternary structure, monomer. Requires [4Fe-4S] cluster as cofactor.

It localises to the cytoplasm. It carries out the reaction N(6)-dimethylallyladenosine(37) in tRNA + (sulfur carrier)-SH + AH2 + 2 S-adenosyl-L-methionine = 2-methylsulfanyl-N(6)-dimethylallyladenosine(37) in tRNA + (sulfur carrier)-H + 5'-deoxyadenosine + L-methionine + A + S-adenosyl-L-homocysteine + 2 H(+). In terms of biological role, catalyzes the methylthiolation of N6-(dimethylallyl)adenosine (i(6)A), leading to the formation of 2-methylthio-N6-(dimethylallyl)adenosine (ms(2)i(6)A) at position 37 in tRNAs that read codons beginning with uridine. The sequence is that of tRNA-2-methylthio-N(6)-dimethylallyladenosine synthase from Clavibacter sepedonicus (Clavibacter michiganensis subsp. sepedonicus).